The chain runs to 361 residues: Teichoic acids export ATP-binding protein TagH (361 aa).

Residues 13–246 form the ABC transporter domain; sequence TKEYDLYKSQ…YREFTKWFKG (234 aa). ATP is bound at residue 60-67; the sequence is GVNGSGKS. A unknown region spans residues 247–361; it reads QSKKEKKHFQ…HDTNATSGVK (115 aa).

Belongs to the ABC transporter superfamily. Teichoic acids exporter (TC 3.A.1.104.1) family. As to quaternary structure, the complex is composed of two ATP-binding proteins (TagH) and two transmembrane proteins (TagG).

It is found in the cell membrane. It carries out the reaction ATP + H2O + teichoic acidSide 1 = ADP + phosphate + teichoic acidSide 2.. Its function is as follows. Part of the ABC transporter complex TagGH involved in teichoic acids export. Responsible for energy coupling to the transport system. In Levilactobacillus brevis (strain ATCC 367 / BCRC 12310 / CIP 105137 / JCM 1170 / LMG 11437 / NCIMB 947 / NCTC 947) (Lactobacillus brevis), this protein is Teichoic acids export ATP-binding protein TagH.